A 227-amino-acid chain; its full sequence is Cytochrome c oxidase subunit 2 (227 aa).

At 1 to 14 the chain is on the mitochondrial intermembrane side; the sequence is MAHAVQYGFQDAAA. A helical membrane pass occupies residues 15–45; it reads PIMEELLYFHDHTLMIVFMISSLVLYIISLM. Topologically, residues 46 to 59 are mitochondrial matrix; it reads LSTELTHTSTMDAQ. The chain crosses the membrane as a helical span at residues 60–87; sequence EVETVWTILPAVILILIALPSLRILYMM. Residues 88–227 lie on the Mitochondrial intermembrane side of the membrane; it reads DEIETPSLTL…YFEEWLLKTL (140 aa). Cu cation is bound by residues His-161, Cys-196, Glu-198, Cys-200, His-204, and Met-207. Glu-198 contacts Mg(2+). The residue at position 218 (Tyr-218) is a Phosphotyrosine.

Belongs to the cytochrome c oxidase subunit 2 family. As to quaternary structure, component of the cytochrome c oxidase (complex IV, CIV), a multisubunit enzyme composed of 14 subunits. The complex is composed of a catalytic core of 3 subunits MT-CO1, MT-CO2 and MT-CO3, encoded in the mitochondrial DNA, and 11 supernumerary subunits COX4I, COX5A, COX5B, COX6A, COX6B, COX6C, COX7A, COX7B, COX7C, COX8 and NDUFA4, which are encoded in the nuclear genome. The complex exists as a monomer or a dimer and forms supercomplexes (SCs) in the inner mitochondrial membrane with NADH-ubiquinone oxidoreductase (complex I, CI) and ubiquinol-cytochrome c oxidoreductase (cytochrome b-c1 complex, complex III, CIII), resulting in different assemblies (supercomplex SCI(1)III(2)IV(1) and megacomplex MCI(2)III(2)IV(2)). Found in a complex with TMEM177, COA6, COX18, COX20, SCO1 and SCO2. Interacts with TMEM177 in a COX20-dependent manner. Interacts with COX20. Interacts with COX16. It depends on Cu cation as a cofactor.

Its subcellular location is the mitochondrion inner membrane. It catalyses the reaction 4 Fe(II)-[cytochrome c] + O2 + 8 H(+)(in) = 4 Fe(III)-[cytochrome c] + 2 H2O + 4 H(+)(out). Its function is as follows. Component of the cytochrome c oxidase, the last enzyme in the mitochondrial electron transport chain which drives oxidative phosphorylation. The respiratory chain contains 3 multisubunit complexes succinate dehydrogenase (complex II, CII), ubiquinol-cytochrome c oxidoreductase (cytochrome b-c1 complex, complex III, CIII) and cytochrome c oxidase (complex IV, CIV), that cooperate to transfer electrons derived from NADH and succinate to molecular oxygen, creating an electrochemical gradient over the inner membrane that drives transmembrane transport and the ATP synthase. Cytochrome c oxidase is the component of the respiratory chain that catalyzes the reduction of oxygen to water. Electrons originating from reduced cytochrome c in the intermembrane space (IMS) are transferred via the dinuclear copper A center (CU(A)) of subunit 2 and heme A of subunit 1 to the active site in subunit 1, a binuclear center (BNC) formed by heme A3 and copper B (CU(B)). The BNC reduces molecular oxygen to 2 water molecules using 4 electrons from cytochrome c in the IMS and 4 protons from the mitochondrial matrix. In Galago senegalensis (Northern lesser bushbaby), this protein is Cytochrome c oxidase subunit 2 (MT-CO2).